A 480-amino-acid polypeptide reads, in one-letter code: Adenylosuccinate synthetase, chloroplastic (480 aa).

The transit peptide at 1 to 54 (MATARVMVADRARAFGGTTATRARRDDQGRRVTIARGIPSRARVVVARASERAY) directs the protein to the chloroplast. GTP contacts are provided by residues 69–75 (GDEGKGK) and 97–99 (GHT). D70 serves as the catalytic Proton acceptor. 2 residues coordinate Mg(2+): D70 and G97. IMP-binding positions include 70–73 (DEGK), 95–98 (NAGH), T187, R201, N278, T293, and R357. The Proton donor role is filled by H98. Residue 353-359 (TTTGRPR) coordinates substrate. GTP contacts are provided by residues R359, 385–387 (KLD), and 468–470 (GVG).

The protein belongs to the adenylosuccinate synthetase family. Homodimer. Requires Mg(2+) as cofactor.

Its subcellular location is the plastid. The protein localises to the chloroplast. The catalysed reaction is IMP + L-aspartate + GTP = N(6)-(1,2-dicarboxyethyl)-AMP + GDP + phosphate + 2 H(+). Its pathway is purine metabolism; AMP biosynthesis via de novo pathway; AMP from IMP: step 1/2. Plays an important role in the de novo pathway and in the salvage pathway of purine nucleotide biosynthesis. Catalyzes the first committed step in the biosynthesis of AMP from IMP. The polypeptide is Adenylosuccinate synthetase, chloroplastic (Ostreococcus tauri).